Consider the following 282-residue polypeptide: Hydroxyacylglutathione hydrolase-like protein (282 aa).

His-54, His-56, Asp-58, His-59, His-110, Asp-134, and His-173 together coordinate Zn(2+).

The protein belongs to the metallo-beta-lactamase superfamily. Glyoxalase II family. Requires Zn(2+) as cofactor.

Its function is as follows. Hydrolase acting on ester bonds. The chain is Hydroxyacylglutathione hydrolase-like protein (HAGHL) from Gallus gallus (Chicken).